Consider the following 347-residue polypeptide: Probable RNA methyltransferase azo0122 (347 aa).

The active-site Proton acceptor is the glutamate 89. The Radical SAM core domain maps to 92–318 (LLLRDGLCVS…AKLRQSAGQD (227 aa)). Residues cysteine 99 and cysteine 323 are joined by a disulfide bond. Cysteine 106, cysteine 110, and cysteine 113 together coordinate [4Fe-4S] cluster. Residues 151–152 (GE), serine 181, 204–206 (SLH), and asparagine 280 each bind S-adenosyl-L-methionine. Cysteine 323 functions as the S-methylcysteine intermediate in the catalytic mechanism.

The protein belongs to the radical SAM superfamily. RlmN family. Requires [4Fe-4S] cluster as cofactor.

It is found in the cytoplasm. The sequence is that of Probable RNA methyltransferase azo0122 from Azoarcus sp. (strain BH72).